Here is a 471-residue protein sequence, read N- to C-terminus: Glutamate--tRNA ligase (471 aa).

The 'HIGH' region signature appears at 9 to 19; it reads PSPTGYLHVGG. Zn(2+) contacts are provided by Cys-98, Cys-100, Cys-125, and Asp-127. The short motif at 237-241 is the 'KMSKS' region element; the sequence is KLSKR. Residue Lys-240 coordinates ATP.

The protein belongs to the class-I aminoacyl-tRNA synthetase family. Glutamate--tRNA ligase type 1 subfamily. In terms of assembly, monomer. It depends on Zn(2+) as a cofactor.

Its subcellular location is the cytoplasm. The enzyme catalyses tRNA(Glu) + L-glutamate + ATP = L-glutamyl-tRNA(Glu) + AMP + diphosphate. Catalyzes the attachment of glutamate to tRNA(Glu) in a two-step reaction: glutamate is first activated by ATP to form Glu-AMP and then transferred to the acceptor end of tRNA(Glu). This Yersinia enterocolitica serotype O:8 / biotype 1B (strain NCTC 13174 / 8081) protein is Glutamate--tRNA ligase.